Consider the following 549-residue polypeptide: Probable protein kinase UbiB (549 aa).

Residues 123–501 form the Protein kinase domain; that stretch reads DFEDTPLASA…QQKAHKSNYL (379 aa). Residues 129 to 137 and K152 contribute to the ATP site; that span reads LASASISQV. D287 functions as the Proton acceptor in the catalytic mechanism. 2 consecutive transmembrane segments (helical) span residues 498 to 518 and 520 to 540; these read SNYL…LLNQ and ATLW…VLGW.

This sequence belongs to the ABC1 family. UbiB subfamily.

Its subcellular location is the cell inner membrane. Its pathway is cofactor biosynthesis; ubiquinone biosynthesis [regulation]. Its function is as follows. Is probably a protein kinase regulator of UbiI activity which is involved in aerobic coenzyme Q (ubiquinone) biosynthesis. In Shewanella piezotolerans (strain WP3 / JCM 13877), this protein is Probable protein kinase UbiB.